The chain runs to 504 residues: Glycerol kinase (504 aa).

Position 14 (Thr-14) interacts with ADP. ATP contacts are provided by Thr-14, Thr-15, and Ser-16. Residue Thr-14 participates in sn-glycerol 3-phosphate binding. Residue Arg-18 participates in ADP binding. The sn-glycerol 3-phosphate site is built by Arg-84, Glu-85, Tyr-136, and Asp-246. Glycerol is bound by residues Arg-84, Glu-85, Tyr-136, Asp-246, and Gln-247. Thr-268 and Gly-311 together coordinate ADP. Thr-268, Gly-311, Gln-315, and Gly-412 together coordinate ATP. 2 residues coordinate ADP: Gly-412 and Asn-416.

It belongs to the FGGY kinase family.

The catalysed reaction is glycerol + ATP = sn-glycerol 3-phosphate + ADP + H(+). It participates in polyol metabolism; glycerol degradation via glycerol kinase pathway; sn-glycerol 3-phosphate from glycerol: step 1/1. Inhibited by fructose 1,6-bisphosphate (FBP). Its function is as follows. Key enzyme in the regulation of glycerol uptake and metabolism. Catalyzes the phosphorylation of glycerol to yield sn-glycerol 3-phosphate. The sequence is that of Glycerol kinase from Aliivibrio salmonicida (strain LFI1238) (Vibrio salmonicida (strain LFI1238)).